The sequence spans 358 residues: Tribbles homolog 3 (358 aa).

Residues 1-54 (MRATPLAAPAGSLSRKKRLELDDNLDTERPVQKRARSGPQPRLPPCLLPLSPPT) form a disordered region. The interaction with DDIT3/CHOP stretch occupies residues 1 to 127 (MRATPLAAPA…KHVARPTEVL (127 aa)). At serine 12 the chain carries Phosphoserine. Over residues 41 to 54 (PRLPPCLLPLSPPT) the composition is skewed to pro residues. The Protein kinase domain occupies 68–316 (LGPYVLLEPE…TGILLHPWLR (249 aa)).

This sequence belongs to the protein kinase superfamily. CAMK Ser/Thr protein kinase family. Tribbles subfamily. In terms of assembly, interacts with AKT1, AKT2, MAP2K1 and MAP2K7. Interacts with ATF4. Interacts with DDIT3/CHOP and inhibits its interaction with EP300/P300. Interacts with APOBEC3C. Interacts (via N-terminus) with APOBEC3A. Interacts with RELA. As to expression, highest expression in liver, pancreas, peripheral blood leukocytes and bone marrow. Also highly expressed in a number of primary lung, colon and breast tumors. Expressed in spleen, thymus, and prostate and is undetectable in other examined tissues, including testis, ovary, small intestine, colon, leukocyte, heart, brain, placenta, lung, skeletal muscle, and kidney.

It is found in the nucleus. Inactive protein kinase which acts as a regulator of the integrated stress response (ISR), a process for adaptation to various stress. Inhibits the transcriptional activity of DDIT3/CHOP and is involved in DDIT3/CHOP-dependent cell death during ER stress. May play a role in programmed neuronal cell death but does not appear to affect non-neuronal cells. Acts as a negative feedback regulator of the ATF4-dependent transcription during the ISR: while TRIB3 expression is promoted by ATF4, TRIB3 protein interacts with ATF4 and inhibits ATF4 transcription activity. Disrupts insulin signaling by binding directly to Akt kinases and blocking their activation. May bind directly to and mask the 'Thr-308' phosphorylation site in AKT1. Interacts with the NF-kappa-B transactivator p65 RELA and inhibits its phosphorylation and thus its transcriptional activation activity. Interacts with MAPK kinases and regulates activation of MAP kinases. Can inhibit APOBEC3A editing of nuclear DNA. This is Tribbles homolog 3 (TRIB3) from Homo sapiens (Human).